Consider the following 112-residue polypeptide: Large ribosomal subunit protein eL30 (112 aa).

The protein belongs to the eukaryotic ribosomal protein eL30 family. In terms of tissue distribution, expressed in roots and leaves.

In Triticum aestivum (Wheat), this protein is Large ribosomal subunit protein eL30.